The following is a 164-amino-acid chain: Pathogenesis-related protein PRB1-2 (164 aa).

Positions 1-24 (MQTPKLAILLALAMAAAMVNLSQA) are cleaved as a signal peptide. Gln25 carries the pyrrolidone carboxylic acid modification. The SCP domain occupies 34–152 (PHNAARSAVG…NRGVFITCNY (119 aa)). Intrachain disulfides connect Cys68-Cys140, Cys113-Cys119, and Cys135-Cys150.

Belongs to the CRISP family.

Functionally, probably involved in the defense reaction of plants against pathogens. The polypeptide is Pathogenesis-related protein PRB1-2 (Hordeum vulgare (Barley)).